The primary structure comprises 332 residues: NADH-quinone oxidoreductase subunit H (332 aa).

The next 9 helical transmembrane spans lie at 4–24, 44–64, 78–98, 120–140, 165–185, 194–214, 255–275, 279–299, and 312–332; these read FAFFALEALIKCIIIIAIFAS, IGPDMVGPFGLIQLVADMIKL, FIFAIAPLISAICAFVSLAAI, VALLFVIGTSGLCFYAVFLGG, VGALALIAIVMLVGSFSLVDI, FSWLIFKQPLAFVLFIIALFI, IAGAILVTLLFLGGFNSFWII, IMMIVKSSFIFFWYFWARAAF, and YLILIPLAVLNLLITALAVLL.

Belongs to the complex I subunit 1 family. NDH-1 is composed of 14 different subunits. Subunits NuoA, H, J, K, L, M, N constitute the membrane sector of the complex.

It is found in the cell inner membrane. The enzyme catalyses a quinone + NADH + 5 H(+)(in) = a quinol + NAD(+) + 4 H(+)(out). NDH-1 shuttles electrons from NADH, via FMN and iron-sulfur (Fe-S) centers, to quinones in the respiratory chain. The immediate electron acceptor for the enzyme in this species is believed to be ubiquinone. Couples the redox reaction to proton translocation (for every two electrons transferred, four hydrogen ions are translocated across the cytoplasmic membrane), and thus conserves the redox energy in a proton gradient. This subunit may bind ubiquinone. The protein is NADH-quinone oxidoreductase subunit H of Campylobacter jejuni subsp. jejuni serotype O:6 (strain 81116 / NCTC 11828).